The sequence spans 1061 residues: RecBCD enzyme subunit RecC (1061 aa).

This sequence belongs to the RecC family. As to quaternary structure, heterotrimer of RecB, RecC and RecD. All subunits contribute to DNA-binding.

Its function is as follows. A helicase/nuclease that prepares dsDNA breaks (DSB) for recombinational DNA repair. Binds to DSBs and unwinds DNA via a highly rapid and processive ATP-dependent bidirectional helicase activity. Unwinds dsDNA until it encounters a Chi (crossover hotspot instigator) sequence from the 3' direction. Cuts ssDNA a few nucleotides 3' to the Chi site. The properties and activities of the enzyme are changed at Chi. The Chi-altered holoenzyme produces a long 3'-ssDNA overhang and facilitates RecA-binding to the ssDNA for homologous DNA recombination and repair. Holoenzyme degrades any linearized DNA that is unable to undergo homologous recombination. In the holoenzyme this subunit recognizes the wild-type Chi sequence, and when added to isolated RecB increases its ATP-dependent helicase processivity. This Buchnera aphidicola subsp. Schizaphis graminum (strain Sg) protein is RecBCD enzyme subunit RecC.